The chain runs to 468 residues: Trehalose-binding lipoprotein LpqY (468 aa).

Residues 1 to 25 (MVMSRGRIPRLGAAVLVALTTAAAA) form the signal peptide. A lipid anchor (N-palmitoyl cysteine) is attached at Cys26. Residue Cys26 is the site of S-diacylglycerol cysteine attachment. Cys54 and Cys372 are oxidised to a cystine. Positions 97, 151, 276, 278, 351, and 421 each coordinate alpha,alpha-trehalose.

It belongs to the bacterial solute-binding protein 1 family. Monomer. The complex is composed of two ATP-binding proteins (SugC), two transmembrane proteins (SugA and SugB) and a solute-binding protein (LpqY).

The protein localises to the cell inner membrane. Its function is as follows. Part of the ABC transporter complex LpqY-SugA-SugB-SugC, which is highly specific for uptake of trehalose. Involved in the recycling of extracellular trehalose released from trehalose-containing molecules synthesized by M.tuberculosis. Trehalose uptake is essential for virulence. This is Trehalose-binding lipoprotein LpqY (lpqY) from Mycobacterium tuberculosis (strain CDC 1551 / Oshkosh).